Reading from the N-terminus, the 1767-residue chain is Endo-alpha-N-acetylgalactosaminidase (1767 aa).

The signal sequence occupies residues 1-39; it reads MNKGLFEKRCKYSIRKFSLGVASVMIGATFFGTSPVLAD. Basic and acidic residues-rich tracts occupy residues 63–75 and 84–111; these read NDGH…KVGE and DGPK…DKPA. 2 disordered regions span residues 63–137 and 301–324; these read NDGH…QGTV and VKTD…GPEV. Positions 112-124 are enriched in low complexity; sequence AAKPETPKTVTPE. 2 stretches are compositionally biased toward basic and acidic residues: residues 127–137 and 304–324; these read TVEKKEQQGTV and DNQE…GPEV. Ca(2+)-binding residues include aspartate 577, asparagine 579, aspartate 581, lysine 583, and aspartate 588. Positions 602-893 are catalytic; the sequence is GWKKVKDITA…DVMTKYFQHF (292 aa). Aspartate 658 provides a ligand contact to substrate. Aspartate 764 functions as the Nucleophile in the catalytic mechanism. The active-site Proton donor/acceptor is glutamate 796. Aspartate 1233, glutamate 1235, glutamate 1281, tryptophan 1284, and aspartate 1411 together coordinate Ca(2+). Positions 1735–1739 match the LPXTG sorting signal motif; the sequence is LPATG. Threonine 1738 is modified (pentaglycyl murein peptidoglycan amidated threonine). The propeptide at 1739-1767 is removed by sortase; it reads GESQFDTALFLASVSLALSALFVVKTKKD.

This sequence belongs to the glycosyl hydrolase 101 family. A subfamily.

It is found in the secreted. It localises to the cell wall. It carries out the reaction a 3-O-[beta-D-galactosyl-(1-&gt;3)-N-acetyl-alpha-D-galactosaminyl]-L-threonyl-[protein] + H2O = beta-D-galactosyl-(1-&gt;3)-N-acetyl-D-galactosamine + L-threonyl-[protein]. The catalysed reaction is a 3-O-[beta-D-galactosyl-(1-&gt;3)-N-acetyl-alpha-D-galactosaminyl]-L-seryl-[protein] + H2O = beta-D-galactosyl-(1-&gt;3)-N-acetyl-D-galactosamine + L-seryl-[protein]. In terms of biological role, involved in the breakdown of mucin-type O-linked glycans. Specifically removes the T-antigen disaccharide (Gal-beta-1,3-GalNAc-alpha) from extracellular host glycoproteins. Representative of a broadly important class of virulence factors. The sequence is that of Endo-alpha-N-acetylgalactosaminidase from Streptococcus pneumoniae (strain ATCC BAA-255 / R6).